Here is a 431-residue protein sequence, read N- to C-terminus: Histidine--tRNA ligase (431 aa).

It belongs to the class-II aminoacyl-tRNA synthetase family. As to quaternary structure, homodimer.

The protein resides in the cytoplasm. The enzyme catalyses tRNA(His) + L-histidine + ATP = L-histidyl-tRNA(His) + AMP + diphosphate + H(+). This chain is Histidine--tRNA ligase, found in Ligilactobacillus salivarius (strain UCC118) (Lactobacillus salivarius).